The sequence spans 421 residues: Putative nickel insertion protein (421 aa).

It belongs to the LarC family.

The polypeptide is Putative nickel insertion protein (Gloeobacter violaceus (strain ATCC 29082 / PCC 7421)).